The chain runs to 238 residues: Capsular polysaccharide phosphotransferase eps5J (238 aa).

The protein belongs to the stealth family.

This is Capsular polysaccharide phosphotransferase eps5J (eps5J) from Streptococcus thermophilus.